A 1363-amino-acid chain; its full sequence is Neurexin-1 (1363 aa).

Over 1–1287 (SKRRDMTVFS…EVIRESSSTT (1287 aa)) the chain is Extracellular. N-linked (GlcNAc...) asparagine glycosylation occurs at Asn-49. An EGF-like 1 domain is found at 67-105 (QSRLCAREDVCLNGGVCSVLNDQAVCDCSQTGFRGKDCS). Cystine bridges form between Cys-71/Cys-83, Cys-77/Cys-92, and Cys-94/Cys-104. 2 Laminin G-like domains span residues 132–329 (IATF…AFKC) and 336–528 (DPIT…KPSC). 3 residues coordinate Ca(2+): Asp-178, Leu-195, and Met-263. Disulfide bonds link Cys-293–Cys-329, Cys-499–Cys-528, Cys-536–Cys-547, Cys-541–Cys-556, and Cys-558–Cys-568. The EGF-like 2 domain occupies 532–569 (TAKPCLSNPCKNNGVCRDGWNRYVCDCSGTGYLGRSCE). 2 consecutive Laminin G-like domains span residues 574–747 (ILSY…IDYC) and 761–936 (DPVT…ERGC). The N-linked (GlcNAc...) asparagine glycan is linked to Asn-646. 4 disulfide bridges follow: Cys-908-Cys-936, Cys-943-Cys-954, Cys-948-Cys-963, and Cys-965-Cys-975. One can recognise an EGF-like 3 domain in the interval 939 to 976 (PSTTCQEDSCANQGVCLQQWDGFSCDCSMTSFSGPLCN). One can recognise a Laminin G-like 5 domain in the interval 982–1180 (YIFSKGGGQI…DANIVIEGNV (199 aa)). Asn-1079 carries an N-linked (GlcNAc...) asparagine glycan. Residues 1244–1280 (CPSDDEDIDPCEPSSGGLANPTRAGGGREYPGSSEVI) are disordered. A helical transmembrane segment spans residues 1288-1308 (GMVVGIVAAAALCILILLYAM). The Cytoplasmic segment spans residues 1309-1363 (YKYRNRDEGSYHVDESRNYISNSAQSNGAVIKEKQPNSAKSSNKNKKNKDKEYYV). Positions 1330 to 1363 (NSAQSNGAVIKEKQPNSAKSSNKNKKNKDKEYYV) are disordered.

It belongs to the neurexin family. The cytoplasmic C-terminal region binds to CASK. The laminin G-like domain 1 binds to NXPH1. Specific isoforms bind to alpha-dystroglycan and to alpha-latrotoxin. Post-translationally, N- and O-glycosylated.

The protein resides in the membrane. Neuronal cell surface protein that may be involved in cell recognition and cell adhesion. May mediate intracellular signaling. In Gallus gallus (Chicken), this protein is Neurexin-1 (NRXN1).